Here is a 269-residue protein sequence, read N- to C-terminus: 5'-nucleotidase SurE (269 aa).

Positions 11, 12, 43, and 101 each coordinate a divalent metal cation.

It belongs to the SurE nucleotidase family. The cofactor is a divalent metal cation.

The protein localises to the cytoplasm. It catalyses the reaction a ribonucleoside 5'-phosphate + H2O = a ribonucleoside + phosphate. In terms of biological role, nucleotidase that shows phosphatase activity on nucleoside 5'-monophosphates. This is 5'-nucleotidase SurE from Prochlorococcus marinus subsp. pastoris (strain CCMP1986 / NIES-2087 / MED4).